Consider the following 344-residue polypeptide: Methylthioribose-1-phosphate isomerase (344 aa).

Substrate-binding positions include 55–57 (RGA), Arg-98, and Gln-202. Catalysis depends on Asp-243, which acts as the Proton donor. Residue 253–254 (NK) participates in substrate binding.

The protein belongs to the eIF-2B alpha/beta/delta subunits family. MtnA subfamily.

The catalysed reaction is 5-(methylsulfanyl)-alpha-D-ribose 1-phosphate = 5-(methylsulfanyl)-D-ribulose 1-phosphate. It functions in the pathway amino-acid biosynthesis; L-methionine biosynthesis via salvage pathway; L-methionine from S-methyl-5-thio-alpha-D-ribose 1-phosphate: step 1/6. Its function is as follows. Catalyzes the interconversion of methylthioribose-1-phosphate (MTR-1-P) into methylthioribulose-1-phosphate (MTRu-1-P). The polypeptide is Methylthioribose-1-phosphate isomerase (Gemmatimonas aurantiaca (strain DSM 14586 / JCM 11422 / NBRC 100505 / T-27)).